We begin with the raw amino-acid sequence, 310 residues long: Ribosomal RNA small subunit methyltransferase H (310 aa).

S-adenosyl-L-methionine-binding positions include 35–37 (GGH), Asp-52, Phe-79, Asp-100, and Gln-107.

Belongs to the methyltransferase superfamily. RsmH family.

The protein resides in the cytoplasm. The catalysed reaction is cytidine(1402) in 16S rRNA + S-adenosyl-L-methionine = N(4)-methylcytidine(1402) in 16S rRNA + S-adenosyl-L-homocysteine + H(+). Specifically methylates the N4 position of cytidine in position 1402 (C1402) of 16S rRNA. In Anaeromyxobacter dehalogenans (strain 2CP-1 / ATCC BAA-258), this protein is Ribosomal RNA small subunit methyltransferase H.